We begin with the raw amino-acid sequence, 405 residues long: DNA primase DnaG (405 aa).

In terms of domain architecture, Toprim spans 172-248 (DAIIIVEGRA…HVDYIARAPP (77 aa)). Mg(2+)-binding residues include glutamate 178, aspartate 222, and aspartate 224. Residues 279–303 (ASGERAEAPPQPAQQPQQEQPAPQR) are disordered. Over residues 292–303 (QQPQQEQPAPQR) the composition is skewed to low complexity.

Belongs to the archaeal DnaG primase family. As to quaternary structure, forms a ternary complex with MCM helicase and DNA. Component of the archaeal exosome complex. Mg(2+) serves as cofactor.

It catalyses the reaction ssDNA + n NTP = ssDNA/pppN(pN)n-1 hybrid + (n-1) diphosphate.. RNA polymerase that catalyzes the synthesis of short RNA molecules used as primers for DNA polymerase during DNA replication. Also part of the exosome, which is a complex involved in RNA degradation. Acts as a poly(A)-binding protein that enhances the interaction between heteromeric, adenine-rich transcripts and the exosome. The sequence is that of DNA primase DnaG from Pyrobaculum arsenaticum (strain DSM 13514 / JCM 11321 / PZ6).